A 56-amino-acid chain; its full sequence is Small ribosomal subunit protein uS14 (56 aa).

Zn(2+)-binding residues include cysteine 21, cysteine 24, cysteine 39, and cysteine 42.

It belongs to the universal ribosomal protein uS14 family. As to quaternary structure, component of the 40S small ribosomal subunit. It depends on Zn(2+) as a cofactor.

It localises to the cytoplasm. The protein resides in the cytosol. It is found in the rough endoplasmic reticulum. The protein is Small ribosomal subunit protein uS14 (RpS29) of Culex quinquefasciatus (Southern house mosquito).